We begin with the raw amino-acid sequence, 380 residues long: QRFP-like peptide receptor (380 aa).

The Extracellular portion of the chain corresponds to 1 to 51 (MMLGNMTFTQTILHELLRQHNMTKNEFIERFGLPPLVYVPELSPGAKTVTL). 2 N-linked (GlcNAc...) asparagine glycosylation sites follow: Asn-5 and Asn-21. A helical membrane pass occupies residues 52 to 72 (VFYVIIFLAALLGNTLVVVVV). The Cytoplasmic portion of the chain corresponds to 73-83 (WKNKVMRTTMN). A helical membrane pass occupies residues 84–104 (IFICSLAASDLLITIVCIPVT). Residues 105–122 (LMQNMLQNWIMGDFMCKL) are Extracellular-facing. A disulfide bond links Cys-120 and Cys-203. Residues 123–143 (VPFIQTIAVASSILTLTGIAI) form a helical membrane-spanning segment. The Cytoplasmic segment spans residues 144 to 164 (ERYYAIIHPLKVKYLLSKTRA). The chain crosses the membrane as a helical span at residues 165 to 185 (GIILALVWVVSVGVATPMLFV). Residues 186–216 (HKAEEIHDFLYEQRFVTCQEKWWGQTQQTSY) lie on the Extracellular side of the membrane. The chain crosses the membrane as a helical span at residues 217-237 (TIFNLVVLFIIPLLTMTSLYI). The Cytoplasmic segment spans residues 238–269 (RIAHRLWVQQPVGVTGNFAHGNSVRRKRQAVK). The helical transmembrane segment at 270-290 (MLVVVVLLFAVCWLPYHTVTV) threads the bilayer. The Extracellular portion of the chain corresponds to 291 to 305 (MNELTGLRLEEKSAK). Residues 306-326 (LLIAIVQLIAFSNSFNNPVVY) traverse the membrane as a helical segment. Residues 327–380 (AILNENFKKNFMTMLRCRVNRVSPQQVTPNTLQTPLEQSTRSCRLPAGAPNQQI) lie on the Cytoplasmic side of the membrane.

Belongs to the G-protein coupled receptor 1 family.

The protein resides in the cell membrane. In terms of biological role, receptor for QRFP-like peptide. The activity of this receptor is mediated by G proteins which activate a phosphatidyl-inositol-calcium second messenger system. The protein is QRFP-like peptide receptor of Branchiostoma floridae (Florida lancelet).